We begin with the raw amino-acid sequence, 678 residues long: Translation initiation factor eIF2B subunit epsilon (678 aa).

T172 bears the Phosphothreonine mark. The interval 467–489 is disordered; it reads STNELHLSDSESSETSSSSEEDM. S500 carries the post-translational modification Phosphoserine. A Phosphothreonine modification is found at T503. Position 506 is a phosphoserine (S506). Residues 508 to 674 form the W2 domain; sequence DFDEGDFNKE…NTAESESESE (167 aa).

This sequence belongs to the eIF-2B gamma/epsilon subunits family. In terms of assembly, component of the translation initiation factor 2B (eIF2B) complex which is a heterodecamer of two sets of five different subunits: alpha, beta, gamma, delta and epsilon. Subunits alpha, beta and delta comprise a regulatory subcomplex and subunits epsilon and gamma comprise a catalytic subcomplex. Within the complex, the hexameric regulatory complex resides at the center, with the two heterodimeric catalytic subcomplexes bound on opposite sides.

It localises to the cytoplasm. Its subcellular location is the cytosol. In terms of biological role, acts as a component of the translation initiation factor 2B (eIF2B) complex, which catalyzes the exchange of GDP for GTP on the eukaryotic initiation factor 2 (eIF2) complex gamma subunit. Its guanine nucleotide exchange factor activity is repressed when bound to eIF2 complex phosphorylated on the alpha subunit, thereby limiting the amount of methionyl-initiator methionine tRNA available to the ribosome and consequently global translation is repressed. The chain is Translation initiation factor eIF2B subunit epsilon (tif225) from Schizosaccharomyces pombe (strain 972 / ATCC 24843) (Fission yeast).